A 392-amino-acid chain; its full sequence is Succinate--CoA ligase [ADP-forming] subunit beta (392 aa).

One can recognise an ATP-grasp domain in the interval 9–248; sequence KDILRKFGVA…TNEEDPFEVE (240 aa). ATP is bound by residues Lys50, 57–59, Glu103, Met106, and Glu111; that span reads GRG. Positions 203 and 217 each coordinate Mg(2+). Substrate-binding positions include Asn268 and 325 to 327; that span reads GIV.

The protein belongs to the succinate/malate CoA ligase beta subunit family. Heterotetramer of two alpha and two beta subunits. It depends on Mg(2+) as a cofactor.

The catalysed reaction is succinate + ATP + CoA = succinyl-CoA + ADP + phosphate. It catalyses the reaction GTP + succinate + CoA = succinyl-CoA + GDP + phosphate. Its pathway is carbohydrate metabolism; tricarboxylic acid cycle; succinate from succinyl-CoA (ligase route): step 1/1. Its function is as follows. Succinyl-CoA synthetase functions in the citric acid cycle (TCA), coupling the hydrolysis of succinyl-CoA to the synthesis of either ATP or GTP and thus represents the only step of substrate-level phosphorylation in the TCA. The beta subunit provides nucleotide specificity of the enzyme and binds the substrate succinate, while the binding sites for coenzyme A and phosphate are found in the alpha subunit. This chain is Succinate--CoA ligase [ADP-forming] subunit beta, found in Pelodictyon phaeoclathratiforme (strain DSM 5477 / BU-1).